Consider the following 136-residue polypeptide: MPSERVAKILEELKALSLLEASELVKAIEETFGVSAAAPAGGMVMAAPVAAAAAAPAAAPEPVEEQTAFDVILEAVPADKKIAILKVVRELTGLGLKDAKDLVEAAPKPVKEGVAKEEANDIKKKLEEAGATVKIK.

Belongs to the bacterial ribosomal protein bL12 family. As to quaternary structure, homodimer. Part of the ribosomal stalk of the 50S ribosomal subunit. Forms a multimeric L10(L12)X complex, where L10 forms an elongated spine to which 2 to 4 L12 dimers bind in a sequential fashion. Binds GTP-bound translation factors.

Forms part of the ribosomal stalk which helps the ribosome interact with GTP-bound translation factors. Is thus essential for accurate translation. This is Large ribosomal subunit protein bL12 from Synechococcus sp. (strain JA-2-3B'a(2-13)) (Cyanobacteria bacterium Yellowstone B-Prime).